A 465-amino-acid chain; its full sequence is Crh-like protein ARB_05253 (465 aa).

Positions 1–21 are cleaved as a signal peptide; it reads MKLSLAAALLGALAVSAQTST. One can recognise a GH16 domain in the interval 22–223; that stretch reads ECNPLKQKCP…WAGGETDFSK (202 aa). Cys23 and Cys30 are joined by a disulfide. Glu114 functions as the Nucleophile in the catalytic mechanism. Glu118 serves as the catalytic Proton donor. Glu118, Trp200, and Thr211 together coordinate chitin. 2 disordered regions span residues 261–325 and 339–442; these read GQVN…STMT and TGTG…PGST. Asn264 carries N-linked (GlcNAc...) asparagine glycosylation. The segment covering 277 to 287 has biased composition (low complexity); that stretch reads SSTLPSSPSTS. Positions 304–325 are enriched in polar residues; it reads QAPNTGSSPSNTLTNGPSSTMT. Low complexity-rich tracts occupy residues 339 to 348, 361 to 376, and 383 to 397; these read TGTGGVVTPT, TSRS…SASS, and MTTS…TGTG. Ser441 carries GPI-anchor amidated serine lipidation. The propeptide at 442 to 465 is removed in mature form; that stretch reads TGAIHSVSNALLLSFCAIAAWALV.

The protein belongs to the glycosyl hydrolase 16 family. CRH1 subfamily. Post-translationally, the GPI-anchor is attached to the protein in the endoplasmic reticulum and serves to target the protein to the cell surface. There, the glucosamine-inositol phospholipid moiety is cleaved off and the GPI-modified mannoprotein is covalently attached via its lipidless GPI glycan remnant to the 1,6-beta-glucan of the outer cell wall layer.

The protein localises to the secreted. It is found in the cell wall. Its subcellular location is the membrane. It catalyses the reaction Random endo-hydrolysis of N-acetyl-beta-D-glucosaminide (1-&gt;4)-beta-linkages in chitin and chitodextrins.. Dual chitinase/transglycosylase that plays a role in cell wall architecture. Chitinase and transglycosylase activities are coupled. Required for the polysaccharide cross-linking at the septa and the cell wall. More specifically, transfers chitin to 1,6-beta-glucan in the cell wall. This chain is Crh-like protein ARB_05253, found in Arthroderma benhamiae (strain ATCC MYA-4681 / CBS 112371) (Trichophyton mentagrophytes).